A 233-amino-acid chain; its full sequence is Adenylyl cyclase-associated protein 1 (233 aa).

The residue at position 14 (Y14) is a Phosphotyrosine. S17 is subject to Phosphoserine. Disordered stretches follow at residues 43-71 (VDKXGPVAKELSGLPSGPSAGSGPPPSAL) and 91-129 (DEKTHKNPADKAQSGPVRXGPKPFSASKPGISPSPKPVT). A compositionally biased stretch (low complexity) spans 53-64 (LSGLPSGPSAGS). Residue K101 is modified to N6-methyllysine. Phosphoserine occurs at positions 104, 115, 122, and 124. K151 is covalently cross-linked (Glycyl lysine isopeptide (Lys-Gly) (interchain with G-Cter in SUMO1)). Residues 173-221 (VPXISINKXDGRHIYLSKNSLDCEIVSAKSSEMNVLIPTEGGDFNEFPV) form the C-CAP/cofactor C-like domain.

Belongs to the CAP family. As to quaternary structure, homodimer. Binds actin monomers.

The protein localises to the cell membrane. Functionally, directly regulates filament dynamics and has been implicated in a number of complex developmental and morphological processes, including mRNA localization and the establishment of cell polarity. This chain is Adenylyl cyclase-associated protein 1 (CAP1), found in Sus scrofa (Pig).